Consider the following 258-residue polypeptide: MPPVTTSAVILRSIEYGDFDLIVTFFTQAQGKRAALAKNARKSFKRFGGALELFSKVSIVYAHGKKKGGLPLLSESNLEQHFSNIRMDIHKTALASLWAETIYSWAEEEHAQEEIFQLLIRSLENLDNEKVDRDKVNILFLLRFLALAGLSPSLDQCVLCCRSLEDWGQGGICFDHARGGIVCPKCGVCLAPGPVLSVGAVKQLLWLNKGDLAAAGRMKLSREAMDRGRDLLESFLAYHLGKEPKSLRFLKDLRRRHF.

This sequence belongs to the RecO family.

Its function is as follows. Involved in DNA repair and RecF pathway recombination. This is DNA repair protein RecO from Desulfatibacillum aliphaticivorans.